A 113-amino-acid polypeptide reads, in one-letter code: uncharacterized protein (113 aa).

Basic and acidic residues predominate over residues 1–19 (MDKKSAHRNPEDAKAGKYE). Residues 1–94 (MDKKSAHRNP…NKWRGKRKVS (94 aa)) form a disordered region. Residues 20–41 (GKHKRKKKRKQNQNQHRSRHRS) show a composition bias toward basic residues. A compositionally biased stretch (low complexity) spans 52–66 (FPSSSSSSSGSQTDS). Residues 75–92 (KIKKKRREKTNKWRGKRK) show a composition bias toward basic residues.

This is an uncharacterized protein from Macaca fascicularis (Crab-eating macaque).